Consider the following 202-residue polypeptide: U-Kazal-Dg21.2 (202 aa).

The first 20 residues, 1-20 (MKYFLWSAVTIFAIVNVVGA), serve as a signal peptide directing secretion. A propeptide spanning residues 21–87 (KNSDFDPRCL…SFCQVEEDFD (67 aa)) is cleaved from the precursor. Kazal-like domains lie at 23–77 (SDFD…KTLM), 85–140 (DFDS…ICRN), and 148–202 (IDPK…KGEC). 5 disulfides stabilise this stretch: C29–C62, C33–C55, C91–C124, C95–C117, and C103–C138. N140 is a glycosylation site (N-linked (GlcNAc...) asparagine). Residues 142–202 (SFKSELIDPK…NWTLIRKGEC (61 aa)) constitute a propeptide that is removed on maturation. Intrachain disulfides connect C154/C187, C158/C180, and C166/C202. N-linked (GlcNAc...) asparagine glycosylation is present at N193.

Expressed by the venom gland.

The protein localises to the secreted. Functionally, may act as a serine protease inhibitor, since it possess the kazal serine protease inhibitor signature. The recombinant peptide does not produce toxic effects on insects. This chain is U-Kazal-Dg21.2, found in Dolopus genitalis (Giant Australian assassin fly).